The primary structure comprises 101 residues: Small ribosomal subunit protein uS14 (101 aa).

The protein belongs to the universal ribosomal protein uS14 family. As to quaternary structure, part of the 30S ribosomal subunit. Contacts proteins S3 and S10.

Functionally, binds 16S rRNA, required for the assembly of 30S particles and may also be responsible for determining the conformation of the 16S rRNA at the A site. This Brucella abortus (strain 2308) protein is Small ribosomal subunit protein uS14.